Here is a 574-residue protein sequence, read N- to C-terminus: Amino-acid acetyltransferase, mitochondrial (574 aa).

The N-terminal 13 residues, 1–13, are a transit peptide targeting the mitochondrion; it reads MWRRIFAHGLKYD. One can recognise an N-acetyltransferase domain in the interval 392 to 560; it reads KGAKPSNNSP…KRLREFMRSV (169 aa).

This sequence belongs to the acetyltransferase family. As to quaternary structure, interacts with the acetylglutamate kinase chain of AGR5,6.

It is found in the mitochondrion. It carries out the reaction L-glutamate + acetyl-CoA = N-acetyl-L-glutamate + CoA + H(+). It functions in the pathway amino-acid biosynthesis; L-arginine biosynthesis; N(2)-acetyl-L-ornithine from L-glutamate: step 1/4. With respect to regulation, feedback inhibition by L-arginine. N-acetylglutamate synthase involved in arginine biosynthesis. The sequence is that of Amino-acid acetyltransferase, mitochondrial (ARG2) from Saccharomyces cerevisiae (strain YJM789) (Baker's yeast).